Here is a 249-residue protein sequence, read N- to C-terminus: Triosephosphate isomerase (249 aa).

Substrate is bound at residue 9 to 11; sequence NWK. The Electrophile role is filled by H94. The active-site Proton acceptor is E166. Residues G172 and 232–233 contribute to the substrate site; that span reads GG.

The protein belongs to the triosephosphate isomerase family. As to quaternary structure, homodimer.

The protein resides in the cytoplasm. The catalysed reaction is D-glyceraldehyde 3-phosphate = dihydroxyacetone phosphate. The protein operates within carbohydrate biosynthesis; gluconeogenesis. It functions in the pathway carbohydrate degradation; glycolysis; D-glyceraldehyde 3-phosphate from glycerone phosphate: step 1/1. Involved in the gluconeogenesis. Catalyzes stereospecifically the conversion of dihydroxyacetone phosphate (DHAP) to D-glyceraldehyde-3-phosphate (G3P). The sequence is that of Triosephosphate isomerase from Xylella fastidiosa (strain M12).